A 61-amino-acid chain; its full sequence is Metallothionein-1F (61 aa).

Residue Met-1 is modified to N-acetylmethionine. A beta region spans residues 1–29 (MDPNCSCPTGGSCTCAGSCTCKACRCTSC). A divalent metal cation-binding residues include Cys-5, Cys-7, Cys-13, Cys-15, Cys-19, Cys-21, Cys-24, Cys-26, Cys-29, Cys-33, Cys-34, Cys-36, Cys-37, Cys-41, Cys-44, Cys-48, Cys-50, and Cys-57. The alpha stretch occupies residues 30–61 (KKSCCSCCPAGCAKCAQGCICKGASDKCSCCA). A Phosphoserine modification is found at Ser-58. Cys-59 and Cys-60 together coordinate a divalent metal cation.

The protein belongs to the metallothionein superfamily. Type 1 family. In terms of assembly, monomer.

Metallothioneins have a high content of cysteine residues that bind various heavy metals; these proteins are transcriptionally regulated by both heavy metals and glucocorticoids. This Sus scrofa (Pig) protein is Metallothionein-1F (MT1F).